The chain runs to 359 residues: TGACG-sequence-specific DNA-binding protein TGA-1A (359 aa).

The segment covering 44 to 54 has biased composition (basic and acidic residues); that stretch reads KRLDNETEDTS. A disordered region spans residues 44–72; that stretch reads KRLDNETEDTSHGTVGTSNRYEPETSKPV. In terms of domain architecture, bZIP spans 72 to 135; it reads VEKVLRRLAQ…GGVDASQLSY (64 aa). Residues 73–125 adopt a coiled-coil conformation; it reads EKVLRRLAQNREAARKSRLRKKAYVQQLENSKLKLIQLEQELERARKQGMCVG. The segment at 74–94 is basic motif; the sequence is KVLRRLAQNREAARKSRLRKK. The segment at 100–114 is leucine-zipper; the sequence is LENSKLKLIQLEQEL. The region spanning 143-354 is the DOG1 domain; it reads TAVFDMEYGH…RVLSSQWATR (212 aa).

Belongs to the bZIP family. As to quaternary structure, binds DNA as a dimer.

It is found in the nucleus. Transcriptional activator that binds specifically to the DNA sequence 5'-TGACG-3'. Recognizes ocs elements like the as-1 motif of the cauliflower mosaic virus 35S promoter. Binding to the as-1-like cis elements mediate auxin- and salicylic acid-inducible transcription. Could also bind to the Hex-motif (5'-TGACGTGG-3') another cis-acting element found in plant histone promoters. The sequence is that of TGACG-sequence-specific DNA-binding protein TGA-1A (TGA1A) from Nicotiana tabacum (Common tobacco).